The following is a 506-amino-acid chain: Putative amidase (506 aa).

Residues Lys121 and Ser196 each act as charge relay system in the active site. Ser220 serves as the catalytic Acyl-ester intermediate.

The protein belongs to the amidase family.

The enzyme catalyses a monocarboxylic acid amide + H2O = a monocarboxylate + NH4(+). The sequence is that of Putative amidase from Synechocystis sp. (strain ATCC 27184 / PCC 6803 / Kazusa).